A 457-amino-acid polypeptide reads, in one-letter code: Protein PIN-LIKES 2 (457 aa).

Over 1–15 the chain is Lumenal; sequence MSGFSSGNVNSRVVD. Residues 16 to 36 form a helical membrane-spanning segment; that stretch reads ILSGVVPLLKLICLTVIGLLL. Residues 37-54 are Cytoplasmic-facing; it reads AHPKTQLVPRATFRLLSK. Residues 55–75 form a helical membrane-spanning segment; the sequence is LVFALFLPCLIFTELGESITL. Topologically, residues 76-85 are lumenal; that stretch reads DNIVQWWFIP. The chain crosses the membrane as a helical span at residues 86 to 106; it reads VNVLLSAVVGSLIGYLVVLIC. Over 107 to 116 the chain is Cytoplasmic; sequence RPPPEFNRFT. Residues 117–137 traverse the membrane as a helical segment; it reads IVMTAFGNTGNLLLAIVSSVC. The Lumenal segment spans residues 138 to 151; it reads HTKTNPFGPNCNSR. A helical transmembrane segment spans residues 152–172; the sequence is GVSYVSFAQWVAVILVYTVVY. Over 173 to 291 the chain is Cytoplasmic; that stretch reads HMMEPPLEYY…PVKHILQPPT (119 aa). The chain crosses the membrane as a helical span at residues 292–312; that stretch reads IASLLAIIIGSVPQLKSVVFG. At 313-322 the chain is on the lumenal side; that stretch reads YDAPLSFITD. The helical transmembrane segment at 323 to 343 threads the bilayer; that stretch reads SLNIMGSAMVPSVMLVLGGML. Residues 344 to 356 are Cytoplasmic-facing; the sequence is SEGPNESTLGLRT. A helical membrane pass occupies residues 357 to 377; the sequence is TIGISVARLLVLPLVGIGIVM. Over 378-393 the chain is Lumenal; the sequence is SADKLGLISSADPMFK. A helical membrane pass occupies residues 394–414; that stretch reads FVLLLQYSTPSAILLGAIASL. The Cytoplasmic segment spans residues 415 to 424; it reads RGYAVREASA. Residues 425–445 form a helical membrane-spanning segment; sequence LLFWQHIFALLSLTFYIVIFF. The Lumenal segment spans residues 446–457; it reads KLTVETTVQGMQ.

This sequence belongs to the auxin efflux carrier (TC 2.A.69.2) family. As to expression, expressed in seedlings, rosette and cauline leaves, flowers and siliques.

The protein localises to the endoplasmic reticulum membrane. In terms of biological role, involved in cellular auxin homeostasis by regulating auxin metabolism. Regulates intracellular auxin accumulation at the endoplasmic reticulum and thus auxin availability for nuclear auxin signaling. The polypeptide is Protein PIN-LIKES 2 (Arabidopsis thaliana (Mouse-ear cress)).